Here is a 485-residue protein sequence, read N- to C-terminus: Keratin, type I cytoskeletal 14 (485 aa).

The segment covering 1–15 (MATCSRQFTSSSSMK) has biased composition (polar residues). The tract at residues 1 to 21 (MATCSRQFTSSSSMKGSCGIG) is disordered. Positions 1-121 (MATCSRQFTS…GLGDGLLVGS (121 aa)) are head. A coil 1A region spans residues 122–157 (EKVTMQNLNDRLATYLDKVRALEEANSDLEVKIRDW). In terms of domain architecture, IF rod spans 122-433 (EKVTMQNLND…RLLEGEDAHL (312 aa)). The linker 1 stretch occupies residues 158–175 (YQRQRPTEIKDYSPYFKT). Residues 176–267 (IEDLKSKILA…KNHEEEMASM (92 aa)) are coil 1B. Positions 268 to 290 (RGQVGGDVNVEMDAAPGVDLSRI) are linker 12. Positions 291-429 (LNEMRDQYEK…ATYRRLLEGE (139 aa)) are coil 2. Residues 430 to 485 (DAHLSSAQFSSSSQFSSGSQSSRDVTSTNRQIRTKVMDVHDGKVVSTHEQVLRTKN) are tail. Residues 432-485 (HLSSAQFSSSSQFSSGSQSSRDVTSTNRQIRTKVMDVHDGKVVSTHEQVLRTKN) are interaction with Type I keratins and keratin filaments. Positions 437–451 (QFSSSSQFSSGSQSS) are enriched in low complexity. The segment at 437–458 (QFSSSSQFSSGSQSSRDVTSTN) is disordered. The residue at position 448 (Ser-448) is a Phosphoserine.

It belongs to the intermediate filament family. As to quaternary structure, heterotetramer of two type I and two type II keratins. Forms a disulfide-linked heterodimer (via 2B domains) with KRT5 (via 2B domains). Forms a heterodimer with KRT1; the interaction is more abundant in the absence of KRT5. Interacts with TRADD and with keratin filaments. Associates with other type I keratins. Interacts with EPPK1. Interacts with KLHL24. Interacts with PKP1 (via N-terminus) and PKP2. In terms of processing, a disulfide bond is formed between rather than within filaments and promotes the formation of a keratin filament cage around the nucleus. Ubiquitinated by the BCR(KLHL24) E3 ubiquitin ligase complex. Expressed in most cells of squamous cell carcinomas, in spinous and suprabasal cells around the branching papillary region of papillomas, and weakly in a few proliferative cells of hyperplastic tissue.

The protein resides in the cytoplasm. It is found in the nucleus. In terms of biological role, the nonhelical tail domain is involved in promoting KRT5-KRT14 filaments to self-organize into large bundles and enhances the mechanical properties involved in resilience of keratin intermediate filaments in vitro. This Rattus norvegicus (Rat) protein is Keratin, type I cytoskeletal 14 (Krt14).